The primary structure comprises 107 residues: CLAVATA3/ESR (CLE)-related protein 10 (107 aa).

Positions 1-23 (MKTNRNRPINILIVFFLLTTARA) are cleaved as a signal peptide. Asn27 and Asn30 each carry an N-linked (GlcNAc...) asparagine glycan. Residues 73 to 107 (SRQPLFSPPPPPTEIDQRYGVEKRLVPSGPNPLHN) form a disordered region. Basic and acidic residues predominate over residues 87 to 97 (IDQRYGVEKRL). Hydroxyproline occurs at positions 99 and 102. Residue Pro102 is glycosylated (O-linked (Ara...) hydroxyproline).

This sequence belongs to the CLV3/ESR signal peptide family. In terms of processing, the O-glycosylation (arabinosylation) of the hydroxyproline Pro-102 enhances binding affinity of the CLE10p peptide for its receptor. As to expression, expressed in stems, apex, leaves, flowers, siliques and pollen.

It localises to the secreted. The protein localises to the extracellular space. Its function is as follows. Extracellular signal peptide that regulates cell fate. Represses root apical meristem maintenance. Regulates the transition of protophloem cells from proliferation to differentiation, thus impinging on postembryonic growth capacity of the root meristem; this signaling pathway requires CRN and CLV2. The polypeptide is CLAVATA3/ESR (CLE)-related protein 10 (Arabidopsis thaliana (Mouse-ear cress)).